We begin with the raw amino-acid sequence, 317 residues long: MGEVQREKVAVIIGPTAVGKTKLSIDLAKALNGEIISGDSMQIYRTMDIGTAKVTKEEMDGIPHYMVDIKNPEESFSVAEFQERVRKHIREITERGKLPIIVGGTGLYIQSVLFDYQFTDDAGDAIYREQMEKLALERGVEYVHKKLQEVDPESAERIHANNVRRVIRALEIFHTTGEKMSDQLEKQENELLYDVSLIGLTMDREMLYDRINLRVDIMMDQGLLEEVEGLYNRGIRDCQSIQAIGYKEIYDYFEDRVSLEEAVSQLKTNSRRYAKRQLTWFRNKMDVTWFDVTDGEKTSEILRYIEGKLQRKSNNSK.

An ATP-binding site is contributed by 14–21 (GPTAVGKT). Residue 16–21 (TAVGKT) participates in substrate binding. The segment at 39 to 42 (DSMQ) is interaction with substrate tRNA.

This sequence belongs to the IPP transferase family. Monomer. Requires Mg(2+) as cofactor.

The enzyme catalyses adenosine(37) in tRNA + dimethylallyl diphosphate = N(6)-dimethylallyladenosine(37) in tRNA + diphosphate. Functionally, catalyzes the transfer of a dimethylallyl group onto the adenine at position 37 in tRNAs that read codons beginning with uridine, leading to the formation of N6-(dimethylallyl)adenosine (i(6)A). The sequence is that of tRNA dimethylallyltransferase from Bacillus cereus (strain AH187).